Consider the following 271-residue polypeptide: Probable WRKY transcription factor 69 (271 aa).

Disordered regions lie at residues 1–47 (MHRR…NVEK) and 130–166 (PSSS…TVTA). Positions 9-18 (ESDDEEDETY) are enriched in acidic residues. The segment at residues 64-130 (GEVYPPSDSW…YACDHNHPFP (67 aa)) is a DNA-binding region (WRKY).

This sequence belongs to the WRKY group II-e family.

Its subcellular location is the nucleus. Its function is as follows. Transcription factor. Interacts specifically with the W box (5'-(T)TGAC[CT]-3'), a frequently occurring elicitor-responsive cis-acting element. This chain is Probable WRKY transcription factor 69 (WRKY69), found in Arabidopsis thaliana (Mouse-ear cress).